A 129-amino-acid polypeptide reads, in one-letter code: MKKAGILNRHLAGALAELGHGDGVLVCDAGMPVPDGPRVVDLAFRAGVPSFAEVVDGLLAELVVEGATAATEVREANAECAALLDGLFPALALVPHERLKELSAGARLIVRTGEARPYANVLLRCGVFF.

His20 functions as the Proton donor in the catalytic mechanism. Substrate-binding positions include Asp28, His96, and 118-120 (YAN).

It belongs to the RbsD / FucU family. RbsD subfamily. As to quaternary structure, homodecamer.

Its subcellular location is the cytoplasm. It carries out the reaction beta-D-ribopyranose = beta-D-ribofuranose. It functions in the pathway carbohydrate metabolism; D-ribose degradation; D-ribose 5-phosphate from beta-D-ribopyranose: step 1/2. Functionally, catalyzes the interconversion of beta-pyran and beta-furan forms of D-ribose. The sequence is that of D-ribose pyranase from Streptomyces coelicolor (strain ATCC BAA-471 / A3(2) / M145).